The sequence spans 64 residues: Large ribosomal subunit protein bL35 (64 aa).

This sequence belongs to the bacterial ribosomal protein bL35 family.

The protein is Large ribosomal subunit protein bL35 of Lactiplantibacillus plantarum (strain ATCC BAA-793 / NCIMB 8826 / WCFS1) (Lactobacillus plantarum).